We begin with the raw amino-acid sequence, 426 residues long: Serine hydroxymethyltransferase (426 aa).

Residues Leu122 and 126 to 128 (GHL) each bind (6S)-5,6,7,8-tetrahydrofolate. Position 231 is an N6-(pyridoxal phosphate)lysine (Lys231). Residues Glu247 and 355–357 (SPF) contribute to the (6S)-5,6,7,8-tetrahydrofolate site.

This sequence belongs to the SHMT family. Homodimer. Pyridoxal 5'-phosphate serves as cofactor.

The protein resides in the cytoplasm. It catalyses the reaction (6R)-5,10-methylene-5,6,7,8-tetrahydrofolate + glycine + H2O = (6S)-5,6,7,8-tetrahydrofolate + L-serine. It participates in one-carbon metabolism; tetrahydrofolate interconversion. It functions in the pathway amino-acid biosynthesis; glycine biosynthesis; glycine from L-serine: step 1/1. Catalyzes the reversible interconversion of serine and glycine with tetrahydrofolate (THF) serving as the one-carbon carrier. This reaction serves as the major source of one-carbon groups required for the biosynthesis of purines, thymidylate, methionine, and other important biomolecules. Also exhibits THF-independent aldolase activity toward beta-hydroxyamino acids, producing glycine and aldehydes, via a retro-aldol mechanism. The chain is Serine hydroxymethyltransferase from Cyanothece sp. (strain PCC 7425 / ATCC 29141).